We begin with the raw amino-acid sequence, 325 residues long: GMP reductase (325 aa).

Catalysis depends on cysteine 173, which acts as the Thioimidate intermediate. 202-225 (IIADGGIHEHGDIAKSIRFGATMV) lines the NADP(+) pocket.

This sequence belongs to the IMPDH/GMPR family. GuaC type 2 subfamily.

The enzyme catalyses IMP + NH4(+) + NADP(+) = GMP + NADPH + 2 H(+). Catalyzes the irreversible NADPH-dependent deamination of GMP to IMP. It functions in the conversion of nucleobase, nucleoside and nucleotide derivatives of G to A nucleotides, and in maintaining the intracellular balance of A and G nucleotides. This chain is GMP reductase, found in Albidiferax ferrireducens (strain ATCC BAA-621 / DSM 15236 / T118) (Rhodoferax ferrireducens).